The following is a 156-amino-acid chain: Ribosomal RNA large subunit methyltransferase H (156 aa).

S-adenosyl-L-methionine is bound by residues L73, G104, and L123–L128.

Belongs to the RNA methyltransferase RlmH family. In terms of assembly, homodimer.

It localises to the cytoplasm. It catalyses the reaction pseudouridine(1915) in 23S rRNA + S-adenosyl-L-methionine = N(3)-methylpseudouridine(1915) in 23S rRNA + S-adenosyl-L-homocysteine + H(+). Its function is as follows. Specifically methylates the pseudouridine at position 1915 (m3Psi1915) in 23S rRNA. In Shewanella piezotolerans (strain WP3 / JCM 13877), this protein is Ribosomal RNA large subunit methyltransferase H.